Here is a 451-residue protein sequence, read N- to C-terminus: Proline--tRNA ligase (451 aa).

The protein belongs to the class-II aminoacyl-tRNA synthetase family. ProS type 2 subfamily. Homodimer.

It is found in the cytoplasm. The catalysed reaction is tRNA(Pro) + L-proline + ATP = L-prolyl-tRNA(Pro) + AMP + diphosphate. Functionally, catalyzes the attachment of proline to tRNA(Pro) in a two-step reaction: proline is first activated by ATP to form Pro-AMP and then transferred to the acceptor end of tRNA(Pro). The sequence is that of Proline--tRNA ligase from Roseobacter denitrificans (strain ATCC 33942 / OCh 114) (Erythrobacter sp. (strain OCh 114)).